The following is a 213-amino-acid chain: uncharacterized protein (213 aa).

This is an uncharacterized protein from Escherichia coli (strain K12).